The sequence spans 205 residues: uncharacterized protein (205 aa).

The helical transmembrane segment at 5–27 threads the bilayer; it reads IIVLFIIHFIMINENVFIALLHY.

This sequence to T.maritima TM1570.

Its subcellular location is the membrane. This is an uncharacterized protein from Aquifex aeolicus (strain VF5).